Here is a 113-residue protein sequence, read N- to C-terminus: Large ribosomal subunit protein uL24 (113 aa).

The protein belongs to the universal ribosomal protein uL24 family. In terms of assembly, part of the 50S ribosomal subunit.

In terms of biological role, one of two assembly initiator proteins, it binds directly to the 5'-end of the 23S rRNA, where it nucleates assembly of the 50S subunit. Its function is as follows. One of the proteins that surrounds the polypeptide exit tunnel on the outside of the subunit. The polypeptide is Large ribosomal subunit protein uL24 (Chlamydia abortus (strain DSM 27085 / S26/3) (Chlamydophila abortus)).